Consider the following 128-residue polypeptide: Small ribosomal subunit protein uS13 (128 aa).

Residues 95–118 are compositionally biased toward basic residues; sequence GLPVRGQRTHTNARTRKGPKKGLV. Positions 95–128 are disordered; it reads GLPVRGQRTHTNARTRKGPKKGLVRKAAAPAPMA.

Belongs to the universal ribosomal protein uS13 family. Part of the 30S ribosomal subunit. Forms a loose heterodimer with protein S19. Forms two bridges to the 50S subunit in the 70S ribosome.

Its function is as follows. Located at the top of the head of the 30S subunit, it contacts several helices of the 16S rRNA. In the 70S ribosome it contacts the 23S rRNA (bridge B1a) and protein L5 of the 50S subunit (bridge B1b), connecting the 2 subunits; these bridges are implicated in subunit movement. Contacts the tRNAs in the A and P-sites. The sequence is that of Small ribosomal subunit protein uS13 from Anaeromyxobacter dehalogenans (strain 2CP-1 / ATCC BAA-258).